Reading from the N-terminus, the 517-residue chain is Aldehyde dehydrogenase X, mitochondrial (517 aa).

The transit peptide at 1–17 (MLRFLAPRLLSLQGRTA) directs the protein to the mitochondrion. Lysine 51 carries the post-translational modification N6-acetyllysine. Lysine 52 is modified (N6-acetyllysine; alternate). Residue lysine 52 is modified to N6-succinyllysine; alternate. N6-succinyllysine is present on lysine 81. 262–267 (GSTEVG) is an NAD(+) binding site. The active-site Proton acceptor is glutamate 285. Cysteine 319 functions as the Nucleophile in the catalytic mechanism. Lysine 364, lysine 383, lysine 399, lysine 414, and lysine 426 each carry N6-acetyllysine; alternate. Lysine 364, lysine 383, lysine 399, lysine 414, and lysine 426 each carry N6-succinyllysine; alternate. An N6-acetyllysine modification is found at lysine 429.

Belongs to the aldehyde dehydrogenase family. In terms of assembly, homotetramer.

The protein resides in the mitochondrion matrix. The catalysed reaction is an aldehyde + NAD(+) + H2O = a carboxylate + NADH + 2 H(+). Its pathway is alcohol metabolism; ethanol degradation; acetate from ethanol: step 2/2. ALDHs play a major role in the detoxification of alcohol-derived acetaldehyde. They are involved in the metabolism of corticosteroids, biogenic amines, neurotransmitters, and lipid peroxidation. This Pongo abelii (Sumatran orangutan) protein is Aldehyde dehydrogenase X, mitochondrial (ALDH1B1).